A 195-amino-acid polypeptide reads, in one-letter code: Protein LIGHT-DEPENDENT SHORT HYPOCOTYLS 7 (195 aa).

Disordered stretches follow at residues 1-41 (MASH…LSRY) and 154-195 (SQAK…NLAS). A compositionally biased stretch (pro residues) spans 21–36 (QPQPQPHQPQSPPNPP). An ALOG domain is found at 40–167 (RYESQKRRDW…ARGVPYKKRK (128 aa)). Over residues 162–175 (PYKKRKKRKKRNPM) the composition is skewed to basic residues. The Nuclear localization signal signature appears at 165–169 (KRKKR). Low complexity predominate over residues 184–195 (TTGTSSSSNLAS).

This sequence belongs to the plant homeotic and developmental regulators ALOG protein family.

Its subcellular location is the nucleus. Functionally, probable transcription regulator that acts as a developmental regulator by promoting cell growth in response to light. This chain is Protein LIGHT-DEPENDENT SHORT HYPOCOTYLS 7 (LSH7), found in Arabidopsis thaliana (Mouse-ear cress).